The sequence spans 514 residues: Inosine-5'-monophosphate dehydrogenase (514 aa).

2 consecutive CBS domains span residues 112-171 and 175-233; these read FISK…DTPV and MTRR…PHST. NAD(+) contacts are provided by residues 270–272 and 320–322; these read DSS and GMG. Positions 322 and 324 each coordinate K(+). IMP is bound at residue serine 325. Position 327 (cysteine 327) interacts with K(+). The active-site Thioimidate intermediate is the cysteine 327. IMP contacts are provided by residues 360–362, 383–384, and 407–411; these read DGG, GG, and YRGMG. Arginine 425 functions as the Proton acceptor in the catalytic mechanism. Glutamine 437 contributes to the IMP binding site. K(+)-binding residues include glutamate 496, glycine 497, and glycine 498. A Microbody targeting signal motif is present at residues 512 to 514; the sequence is AKM.

Belongs to the IMPDH/GMPR family. Heterotetramer. Interacts with glycosomal protein sorting receptor PEX5. K(+) is required as a cofactor.

It localises to the glycosome. The enzyme catalyses IMP + NAD(+) + H2O = XMP + NADH + H(+). The protein operates within purine metabolism; XMP biosynthesis via de novo pathway; XMP from IMP: step 1/1. Mycophenolic acid (MPA) is a non-competitive inhibitor that prevents formation of the closed enzyme conformation by binding to the same site as the amobile flap. In contrast, mizoribine monophosphate (MZP) is a competitive inhibitor that induces the closed conformation. MPA is a potent inhibitor of mammalian IMPDHs but a poor inhibitor of the bacterial enzymes. MZP is a more potent inhibitor of bacterial IMPDH. Potently inhibited by MPA. Inhibited by XMP and GMP. Catalyzes the conversion of inosine 5'-phosphate (IMP) to xanthosine 5'-phosphate (XMP), the first committed and rate-limiting step in the de novo synthesis of guanine nucleotides, and therefore plays an important role in the regulation of cell growth. The sequence is that of Inosine-5'-monophosphate dehydrogenase from Leishmania donovani.